Reading from the N-terminus, the 345-residue chain is Gibberellin receptor GID1A (345 aa).

Ala2 bears the N-acetylalanine mark. An Involved in the stabilization of the negatively charged intermediate by the formation of the oxyanion hole motif is present at residues 113–115 (HGG). Gibberellin A4 is bound by residues 115-116 (GS), Tyr127, and Ser191. Residues Ser116, Tyr127, Ser191, and Phe238 each coordinate gibberellin A3. Ser191 is a catalytic residue. Asp289 is a catalytic residue. Gly320 provides a ligand contact to gibberellin A4. Gly320 lines the gibberellin A3 pocket.

The protein belongs to the 'GDXG' lipolytic enzyme family. As to quaternary structure, interacts (via N-terminus) with the DELLA proteins GAI, RGA, RGL1, RGL2 and RGL3 (via N-terminus) in a GA-dependent manner. As to expression, widely expressed.

The protein resides in the nucleus. In terms of biological role, functions as a soluble gibberellin (GA) receptor. GA is an essential hormone that regulates growth and development in plants. Binds with high affinity the biologically active gibberellin GA4, but has no affinity for the biologically inactive GAs. In response to GA, interacts with specific DELLA proteins, known as repressors of GA-induced growth, and targets them for degradation via proteasome. Seems to be required for GA signaling that controls root growth, seed germination, stem elongation and flower development. Partially redundant with GID1B and GID1C. This Arabidopsis thaliana (Mouse-ear cress) protein is Gibberellin receptor GID1A (GID1A).